The following is a 207-amino-acid chain: Outer-membrane lipoprotein carrier protein (207 aa).

An N-terminal signal peptide occupies residues 1-21 (MRAIRMLLVSALAMGAVSAHA).

It belongs to the LolA family. In terms of assembly, monomer.

Its subcellular location is the periplasm. Its function is as follows. Participates in the translocation of lipoproteins from the inner membrane to the outer membrane. Only forms a complex with a lipoprotein if the residue after the N-terminal Cys is not an aspartate (The Asp acts as a targeting signal to indicate that the lipoprotein should stay in the inner membrane). In Pseudomonas entomophila (strain L48), this protein is Outer-membrane lipoprotein carrier protein.